The primary structure comprises 220 residues: Ribonuclease P protein component 3 (220 aa).

It belongs to the eukaryotic/archaeal RNase P protein component 3 family. In terms of assembly, consists of a catalytic RNA component and at least 4-5 protein subunits.

The protein localises to the cytoplasm. It carries out the reaction Endonucleolytic cleavage of RNA, removing 5'-extranucleotides from tRNA precursor.. Its function is as follows. Part of ribonuclease P, a protein complex that generates mature tRNA molecules by cleaving their 5'-ends. This chain is Ribonuclease P protein component 3, found in Thermococcus kodakarensis (strain ATCC BAA-918 / JCM 12380 / KOD1) (Pyrococcus kodakaraensis (strain KOD1)).